A 327-amino-acid polypeptide reads, in one-letter code: Flap endonuclease 1 (327 aa).

The tract at residues 1–100 (MGNADLRQLA…DEIADRREQR (100 aa)) is N-domain. Mg(2+) contacts are provided by Asp28, Asp82, Glu154, Glu156, Asp176, Asp178, and Asp226. Positions 118–247 (EAARLDARTQ…TALDAIGEHG (130 aa)) are I-domain. The tract at residues 319-327 (AQTGLDRWT) is interaction with PCNA.

Belongs to the XPG/RAD2 endonuclease family. FEN1 subfamily. As to quaternary structure, interacts with PCNA. PCNA stimulates the nuclease activity without altering cleavage specificity. Mg(2+) is required as a cofactor.

In terms of biological role, structure-specific nuclease with 5'-flap endonuclease and 5'-3' exonuclease activities involved in DNA replication and repair. During DNA replication, cleaves the 5'-overhanging flap structure that is generated by displacement synthesis when DNA polymerase encounters the 5'-end of a downstream Okazaki fragment. Binds the unpaired 3'-DNA end and kinks the DNA to facilitate 5' cleavage specificity. Cleaves one nucleotide into the double-stranded DNA from the junction in flap DNA, leaving a nick for ligation. Also involved in the base excision repair (BER) pathway. Acts as a genome stabilization factor that prevents flaps from equilibrating into structures that lead to duplications and deletions. Also possesses 5'-3' exonuclease activity on nicked or gapped double-stranded DNA. This Halobacterium salinarum (strain ATCC 29341 / DSM 671 / R1) protein is Flap endonuclease 1.